The chain runs to 517 residues: Cobyric acid synthase (517 aa).

The GATase cobBQ-type domain occupies 253-453 (EVEIAVIKLP…IHGILDNDSL (201 aa)). The active-site Nucleophile is Cys334. His445 is a catalytic residue.

The protein belongs to the CobB/CobQ family. CobQ subfamily.

It participates in cofactor biosynthesis; adenosylcobalamin biosynthesis. Catalyzes amidations at positions B, D, E, and G on adenosylcobyrinic A,C-diamide. NH(2) groups are provided by glutamine, and one molecule of ATP is hydrogenolyzed for each amidation. This chain is Cobyric acid synthase, found in Moorella thermoacetica (strain ATCC 39073 / JCM 9320).